The chain runs to 702 residues: Ribosomal RNA large subunit methyltransferase K/L (702 aa).

A THUMP domain is found at 43-154 (LVYQSLMWSR…KETASIALDL (112 aa)).

The protein belongs to the methyltransferase superfamily. RlmKL family.

Its subcellular location is the cytoplasm. The catalysed reaction is guanosine(2445) in 23S rRNA + S-adenosyl-L-methionine = N(2)-methylguanosine(2445) in 23S rRNA + S-adenosyl-L-homocysteine + H(+). It carries out the reaction guanosine(2069) in 23S rRNA + S-adenosyl-L-methionine = N(2)-methylguanosine(2069) in 23S rRNA + S-adenosyl-L-homocysteine + H(+). Functionally, specifically methylates the guanine in position 2445 (m2G2445) and the guanine in position 2069 (m7G2069) of 23S rRNA. This chain is Ribosomal RNA large subunit methyltransferase K/L, found in Escherichia coli O6:K15:H31 (strain 536 / UPEC).